We begin with the raw amino-acid sequence, 218 residues long: Large ribosomal subunit protein bL25 (218 aa).

Belongs to the bacterial ribosomal protein bL25 family. CTC subfamily. In terms of assembly, part of the 50S ribosomal subunit; part of the 5S rRNA/L5/L18/L25 subcomplex. Contacts the 5S rRNA. Binds to the 5S rRNA independently of L5 and L18.

In terms of biological role, this is one of the proteins that binds to the 5S RNA in the ribosome where it forms part of the central protuberance. This is Large ribosomal subunit protein bL25 from Gluconobacter oxydans (strain 621H) (Gluconobacter suboxydans).